Consider the following 281-residue polypeptide: Urease accessory protein UreD (281 aa).

Belongs to the UreD family. UreD, UreF and UreG form a complex that acts as a GTP-hydrolysis-dependent molecular chaperone, activating the urease apoprotein by helping to assemble the nickel containing metallocenter of UreC. The UreE protein probably delivers the nickel.

It is found in the cytoplasm. Functionally, required for maturation of urease via the functional incorporation of the urease nickel metallocenter. This is Urease accessory protein UreD from Pseudomonas savastanoi pv. phaseolicola (strain 1448A / Race 6) (Pseudomonas syringae pv. phaseolicola (strain 1448A / Race 6)).